The following is a 148-amino-acid chain: Large ribosomal subunit protein bL9 (148 aa).

It belongs to the bacterial ribosomal protein bL9 family.

Functionally, binds to the 23S rRNA. In Listeria monocytogenes serotype 4a (strain HCC23), this protein is Large ribosomal subunit protein bL9.